Reading from the N-terminus, the 2517-residue chain is Serine/threonine-protein kinase ATR (2517 aa).

The HEAT repeat unit spans residues glutamate 1178 to aspartate 1214. The FAT domain maps to leucine 1509–serine 2066. The residue at position 1569 (serine 1569) is a Phosphoserine. Tyrosine 1570 bears the Phosphotyrosine mark. Position 1573 is a phosphoserine (serine 1573). At threonine 1575 the chain carries Phosphothreonine. Residues phenylalanine 2184–serine 2508 enclose the PI3K/PI4K catalytic domain. The tract at residues isoleucine 2190 to lysine 2196 is G-loop. The interval glycine 2360–asparagine 2368 is catalytic loop. Residues histidine 2380–threonine 2404 are activation loop. The FATC domain maps to isoleucine 2485 to leucine 2517.

The protein belongs to the PI3/PI4-kinase family. ATM subfamily. In terms of assembly, interacts with mus304. It depends on Mn(2+) as a cofactor.

The protein resides in the nucleus. It catalyses the reaction L-seryl-[protein] + ATP = O-phospho-L-seryl-[protein] + ADP + H(+). The enzyme catalyses L-threonyl-[protein] + ATP = O-phospho-L-threonyl-[protein] + ADP + H(+). Functionally, serine/threonine protein kinase which activates checkpoint signaling upon genotoxic stresses such as ionizing radiation (IR), ultraviolet light (UV), or DNA replication stalling, thereby acting as a DNA damage sensor. Recognizes the substrate consensus sequence [ST]-Q. Phosphorylates various proteins, which collectively inhibits DNA replication and mitosis and promotes DNA repair and recombination. Phosphorylates grp/CHK1. Phosphorylates 'Ser-137' of histone variant H2AX/H2AV at sites of DNA damage, thereby regulating DNA damage response mechanism. Essential for the DNA damage checkpoint in larval imaginal disks and neuroblasts and for the DNA replication checkpoint in the embryo. Also has an essential role during early nuclear divisions in embryos, where it is required to delay mitosis in response to incomplete DNA replication. Also plays an important role during meiosis, where it may monitor double-strand-break repair during meiotic crossing over, to regulate the progression of prophase I, and to enforce metaphase I delay observed at the end of oogenesis. Involved in telomere maintenance and prevention of telomere fusion; potentially functioning downstream of moi/modigliani. In Drosophila melanogaster (Fruit fly), this protein is Serine/threonine-protein kinase ATR (mei-41).